A 551-amino-acid chain; its full sequence is HTH-type transcriptional regulator SgrR (551 aa).

Residues 1 to 116 (MPSARLQQQF…LVSHLGRSFR (116 aa)) form the HTH marR-type domain. The segment at residues 26 to 49 (LNELAALLSCSRRHMRTLLNTMQD) is a DNA-binding region (H-T-H motif). Residues 163–492 (ELEADIAHHW…IDWQADAARW (330 aa)) form a solute-binding region.

Activates the small RNA gene sgrS under glucose-phosphate stress conditions as well as yfdZ. Represses its own transcription under both stress and non-stress conditions; this repression likely provides one measure of control over sgrR at the level of synthesis. Might act as a sensor of the intracellular accumulation of phosphoglucose by binding these molecules in its C-terminal solute-binding domain. This is HTH-type transcriptional regulator SgrR (sgrR) from Escherichia coli (strain K12).